Consider the following 125-residue polypeptide: Histone H2A (125 aa).

Positions 1–18 (MSGRGKGGKARAKAKSRS) are enriched in basic residues. A disordered region spans residues 1–21 (MSGRGKGGKARAKAKSRSSRA). At Ser2 the chain carries N-acetylserine. At Ser2 the chain carries Phosphoserine. Position 104 is an N5-methylglutamine (Gln104).

This sequence belongs to the histone H2A family. As to quaternary structure, the nucleosome is a histone octamer containing two molecules each of H2A, H2B, H3 and H4 assembled in one H3-H4 heterotetramer and two H2A-H2B heterodimers. The octamer wraps approximately 147 bp of DNA.

The protein resides in the nucleus. Its subcellular location is the chromosome. Its function is as follows. Core component of nucleosome. Nucleosomes wrap and compact DNA into chromatin, limiting DNA accessibility to the cellular machineries which require DNA as a template. Histones thereby play a central role in transcription regulation, DNA repair, DNA replication and chromosomal stability. DNA accessibility is regulated via a complex set of post-translational modifications of histones, also called histone code, and nucleosome remodeling. This chain is Histone H2A, found in Asterias rubens (Common European starfish).